Consider the following 217-residue polypeptide: 3-demethoxyubiquinol 3-hydroxylase (217 aa).

Fe cation contacts are provided by Glu-66, Glu-96, His-99, Glu-148, Glu-180, and His-183.

It belongs to the COQ7 family. Requires Fe cation as cofactor.

The protein localises to the cell membrane. It catalyses the reaction a 5-methoxy-2-methyl-3-(all-trans-polyprenyl)benzene-1,4-diol + AH2 + O2 = a 3-demethylubiquinol + A + H2O. The protein operates within cofactor biosynthesis; ubiquinone biosynthesis. In terms of biological role, catalyzes the hydroxylation of 2-nonaprenyl-3-methyl-6-methoxy-1,4-benzoquinol during ubiquinone biosynthesis. This is 3-demethoxyubiquinol 3-hydroxylase from Xylella fastidiosa (strain 9a5c).